Consider the following 180-residue polypeptide: Adenine phosphoribosyltransferase (180 aa).

Alanine 2 bears the N-acetylalanine mark. Phosphoserine occurs at positions 15 and 30. Tyrosine 60 carries the post-translational modification Phosphotyrosine. Serine 66 carries the phosphoserine modification. A Phosphothreonine modification is found at threonine 135.

The protein belongs to the purine/pyrimidine phosphoribosyltransferase family. Homodimer.

The protein resides in the cytoplasm. The catalysed reaction is AMP + diphosphate = 5-phospho-alpha-D-ribose 1-diphosphate + adenine. It functions in the pathway purine metabolism; AMP biosynthesis via salvage pathway; AMP from adenine: step 1/1. Catalyzes a salvage reaction resulting in the formation of AMP, that is energically less costly than de novo synthesis. This is Adenine phosphoribosyltransferase from Bos taurus (Bovine).